We begin with the raw amino-acid sequence, 1168 residues long: Pre-mRNA-splicing factor ATP-dependent RNA helicase prp22 (1168 aa).

Disordered stretches follow at residues 77–100 (KDDIPTDNVNNGSNSVNGASHDLD) and 144–197 (TLAK…RSSR). Residues 84-94 (NVNNGSNSVNG) show a composition bias toward low complexity. The segment covering 149 to 173 (RRNDRDSRRDERHYLNGIRERRERS) has biased composition (basic and acidic residues). Residues 184-197 (TSISGQSHSSRSSR) show a composition bias toward low complexity. Residues 207–280 (YGIYSGVVSG…SAKRISLSMK (74 aa)) enclose the S1 motif domain. Residues 287-314 (GEDLNPDQVSRSTKKGSGANAIPLSAQN) form a disordered region. In terms of domain architecture, Helicase ATP-binding spans 520-684 (LEAVSKNQIL…FYKCPIFTIP (165 aa)). 533–540 (GETGSGKT) lines the ATP pocket. The short motif at 631-634 (DEAH) is the DEAH box element. In terms of domain architecture, Helicase C-terminal spans 702-882 (YLDAALMTVM…HTILMLKAMG (181 aa)).

Belongs to the DEAD box helicase family. DEAH subfamily. DDX8/PRP22 sub-subfamily. Belongs to the 40S cdc5-associated complex (or cwf complex), a spliceosome sub-complex reminiscent of a late-stage spliceosome composed of the U2, U5 and U6 snRNAs and at least brr2, cdc5, cwf2/prp3, cwf3/syf1, cwf4/syf3, cwf5/ecm2, spp42/cwf6, cwf7/spf27, cwf8, cwf9, cwf10, cwf11, cwf12, prp45/cwf13, cwf14, cwf15, cwf16, cwf17, cwf18, cwf19, cwf20, cwf21, cwf22, cwf23, cwf24, cwf25, cwf26, cyp7/cwf27, cwf28, cwf29/ist3, lea1, msl1, prp5/cwf1, prp10, prp12/sap130, prp17, prp22, sap61, sap62, sap114, sap145, slu7, smb1, smd1, smd3, smf1, smg1 and syf2.

The protein localises to the nucleus. The enzyme catalyses ATP + H2O = ADP + phosphate + H(+). Its function is as follows. Acts late in the splicing of pre-mRNA. Required for the splicing of introns with a branch nucleotide to 3'-splice site distance greater or equal to 15. Mediates the release of the spliced mRNA from spliceosomes. This chain is Pre-mRNA-splicing factor ATP-dependent RNA helicase prp22 (prp22), found in Schizosaccharomyces pombe (strain 972 / ATCC 24843) (Fission yeast).